A 60-amino-acid chain; its full sequence is MKVFFAVLITLFICSMIIGIHGVGINVKCKHSGQCLKPCKDAGMRFGKCINGKCDCTPKG.

Positions 1-22 (MKVFFAVLITLFICSMIIGIHG) are cleaved as a signal peptide. Intrachain disulfides connect cysteine 29-cysteine 49, cysteine 35-cysteine 54, and cysteine 39-cysteine 56. Lysine 59 carries the post-translational modification Lysine amide.

It belongs to the short scorpion toxin superfamily. Potassium channel inhibitor family. Alpha-KTx 03 subfamily. Expressed by the venom gland.

Its subcellular location is the secreted. Blocks voltage-gated potassium channels. At 2 uM, blocks rat Kv1.1/KCNA1 and Kv1.3/KCNA3, has a strong effect on rat Kv1.2/KCNA2 and Kv1.6/KCNA6 as well as a moderate effect on Shaker IR. The protein is Potassium channel toxin alpha-KTx 3.6 of Olivierus martensii (Manchurian scorpion).